Consider the following 582-residue polypeptide: GPI-anchor transamidase component PIGT (582 aa).

The signal sequence occupies residues 1 to 25 (MAAAMPLGLPLRLLVLLLVGRGCCG). The Lumenal portion of the chain corresponds to 26-529 (CAEGPRDSLR…NLPTPDFSMP (504 aa)). Asparagine 168 carries N-linked (GlcNAc...) asparagine glycosylation. Disulfide bonds link cysteine 199-cysteine 276 and cysteine 230-cysteine 235. Residues asparagine 295 and asparagine 331 are each glycosylated (N-linked (GlcNAc...) asparagine). The a 2-acyl-6-[6-phosphoethanolamine-alpha-D-mannosyl-(1-&gt;2)-6-phosphoethanolamine-alpha-D-mannosyl-(1-&gt;6)-2-phosphoethanolamine-alpha-D-mannosyl-(1-&gt;4)-alpha-D-glucosaminyl]-1-(1-radyl,2-acyl-sn-glycero-3-phospho)-1D-myo-inositol site is built by asparagine 465, aspartate 525, serine 527, and asparagine 531. The helical transmembrane segment at 530–552 (YNVICLTCTVVAVCYGSFYNLLT) threads the bilayer. Over 553–582 (RTFHIEEPKSGGLAKRLANLIRRARGVPPL) the chain is Cytoplasmic.

This sequence belongs to the PIGT family. Heteropentamer. Part of the GPI-anchor transamidase complex, consisting of PIGK, PIGT, PIGS, PIGU and GAA1. In terms of processing, the disulfide bond between PIGK/GPI8 and PIGT is important for normal enzyme activity.

It is found in the endoplasmic reticulum membrane. The protein operates within glycolipid biosynthesis; glycosylphosphatidylinositol-anchor biosynthesis. In terms of biological role, component of the glycosylphosphatidylinositol-anchor (GPI-anchor) transamidase (GPI-T) complex that catalyzes the formation of the linkage between a proprotein and a GPI-anchor and participates in GPI anchored protein biosynthesis. May play a crucial role in GPI-T complex assembly in the luminal layer. Binds GPI-anchor. This chain is GPI-anchor transamidase component PIGT, found in Mus musculus (Mouse).